We begin with the raw amino-acid sequence, 285 residues long: MSFIDRNDGGENSIDVDTLRTMIDLYSKNFVEVSSDVEIKTNNIVDKLFAYFKKHNITVINAGIIANNSELIDEDLLDLGTINNGILSLNIQPVTITVDLKSGILNSVKYHQSKLINILLDKNIDPIKIEPKIHLLLSTYKQYEPLVRLVRMKSQVNDFDFVYPLAAHGELDIIKLVMHYYQLQDEIIGKICVQAIMNGRVNIVEHFLTSEAFRSAPDLMYGFFIRGIEHGGHINITKYFIDKGLCIQQNDYEPVKVAAMTKRRDILKYFYELDNSIVNIIIDNV.

ANK repeat units lie at residues 99 to 129 (DLKS…PIKI), 157 to 186 (NDFD…LQDE), 188 to 214 (IGKI…EAFR), and 215 to 249 (SAPD…CIQQ).

The chain is Putative ankyrin repeat protein R551 from Acanthamoeba polyphaga (Amoeba).